Consider the following 74-residue polypeptide: uncharacterized protein (74 aa).

This is an uncharacterized protein from Dictyostelium discoideum (Social amoeba).